Consider the following 161-residue polypeptide: E3 ubiquitin ligase complex SCF subunit sconC (161 aa).

The interaction with the F-box domain of F-box proteins stretch occupies residues 103–161 (ILAANYLDIKGLLDVGCKTVANMIKGKSPEEIRKTFNIQNDFTPEEEDQIRRENEWAEE).

Belongs to the SKP1 family. As to quaternary structure, component of the SCF (SKP1-CUL1-F-box protein) E3 ubiquitin ligase complexes.

It participates in protein modification; protein ubiquitination. Its function is as follows. Essential component of the SCF (SKP1-CUL1-F-box protein) E3 ubiquitin ligase complexes, which mediate the ubiquitination and subsequent proteasomal degradation of target proteins. Controls sulfur metabolite repression, probably by mediating the inactivation or degradation of the metR transcription factor. This is E3 ubiquitin ligase complex SCF subunit sconC (sconC) from Aspergillus terreus (strain NIH 2624 / FGSC A1156).